The chain runs to 316 residues: NADH-quinone oxidoreductase subunit H (316 aa).

Helical transmembrane passes span 6 to 26 (PAVV…LIWV), 74 to 94 (FVIA…VVPF), 98 to 118 (VGVI…SLAV), 145 to 165 (ISYE…AGSF), 177 to 197 (GWYV…AVAE), 233 to 253 (YLGI…GWLG), 256 to 276 (FLPP…FFIL), and 296 to 316 (VMLP…LSVP).

The protein belongs to the complex I subunit 1 family. In terms of assembly, NDH-1 is composed of 14 different subunits. Subunits NuoA, H, J, K, L, M, N constitute the membrane sector of the complex.

The protein localises to the cell inner membrane. It catalyses the reaction a quinone + NADH + 5 H(+)(in) = a quinol + NAD(+) + 4 H(+)(out). Functionally, NDH-1 shuttles electrons from NADH, via FMN and iron-sulfur (Fe-S) centers, to quinones in the respiratory chain. The immediate electron acceptor for the enzyme in this species is believed to be ubiquinone. Couples the redox reaction to proton translocation (for every two electrons transferred, four hydrogen ions are translocated across the cytoplasmic membrane), and thus conserves the redox energy in a proton gradient. This subunit may bind ubiquinone. In Methylococcus capsulatus (strain ATCC 33009 / NCIMB 11132 / Bath), this protein is NADH-quinone oxidoreductase subunit H.